Here is a 92-residue protein sequence, read N- to C-terminus: Phosphoribosyl-ATP pyrophosphatase (92 aa).

The protein belongs to the PRA-PH family.

The protein localises to the cytoplasm. The catalysed reaction is 1-(5-phospho-beta-D-ribosyl)-ATP + H2O = 1-(5-phospho-beta-D-ribosyl)-5'-AMP + diphosphate + H(+). The protein operates within amino-acid biosynthesis; L-histidine biosynthesis; L-histidine from 5-phospho-alpha-D-ribose 1-diphosphate: step 2/9. The chain is Phosphoribosyl-ATP pyrophosphatase from Leptospira borgpetersenii serovar Hardjo-bovis (strain JB197).